The following is a 151-amino-acid chain: Transcription antitermination protein NusB (151 aa).

It belongs to the NusB family.

Functionally, involved in transcription antitermination. Required for transcription of ribosomal RNA (rRNA) genes. Binds specifically to the boxA antiterminator sequence of the ribosomal RNA (rrn) operons. The polypeptide is Transcription antitermination protein NusB (Thermodesulfovibrio yellowstonii (strain ATCC 51303 / DSM 11347 / YP87)).